A 371-amino-acid chain; its full sequence is Glutamate 5-kinase (371 aa).

Lys-8 serves as a coordination point for ATP. Substrate-binding residues include Ser-49, Asp-136, and Asn-149. Residues 169–170 (TD) and 213–219 (TGGMATK) contribute to the ATP site. Residues 278-356 (TGKLILDDGA…EDIPQVLGYA (79 aa)) form the PUA domain.

Belongs to the glutamate 5-kinase family.

Its subcellular location is the cytoplasm. It catalyses the reaction L-glutamate + ATP = L-glutamyl 5-phosphate + ADP. It functions in the pathway amino-acid biosynthesis; L-proline biosynthesis; L-glutamate 5-semialdehyde from L-glutamate: step 1/2. Catalyzes the transfer of a phosphate group to glutamate to form L-glutamate 5-phosphate. The polypeptide is Glutamate 5-kinase (Acaryochloris marina (strain MBIC 11017)).